We begin with the raw amino-acid sequence, 331 residues long: Smad-related protein daf-14 (331 aa).

The MH2 domain occupies 134–331 (WCTIFYYELT…NERPEIGSRS (198 aa)). The disordered stretch occupies residues 168-187 (ECRMSLTSQPSSRNSKSSQI). Residues 175–185 (SQPSSRNSKSS) are compositionally biased toward low complexity.

Interacts with R-SMAD daf-8 and co-SMAD daf-3. Interacts with daf-3 in a daf-8 dependent manner.

Functionally, probably an atypical receptor-regulated SMAD (R-SMAD) that is an intracellular signal transducer and transcriptional modulator activated by TGF-beta-like daf-7 signaling. Plays a role in TGF-beta-like daf-7 signaling in regulating entry into a developmentally arrested larval state known as dauer, in response to harsh environmental conditions; partially redundant with R-SMAD daf-8. The protein is Smad-related protein daf-14 of Caenorhabditis elegans.